Consider the following 322-residue polypeptide: Glutamyl-Q tRNA(Asp) synthetase (322 aa).

L-glutamate-binding positions include 28–32 (RFAPS) and Glu64. The 'HIGH' region motif lies at 31-41 (PSPSGDLHFGS). The Zn(2+) site is built by Cys120, Cys122, Tyr134, and Cys138. Tyr191 and Arg209 together coordinate L-glutamate. The short motif at 247 to 251 (KLSKQ) is the 'KMSKS' region element. Lys250 serves as a coordination point for ATP.

Belongs to the class-I aminoacyl-tRNA synthetase family. GluQ subfamily. The cofactor is Zn(2+).

Its function is as follows. Catalyzes the tRNA-independent activation of glutamate in presence of ATP and the subsequent transfer of glutamate onto a tRNA(Asp). Glutamate is transferred on the 2-amino-5-(4,5-dihydroxy-2-cyclopenten-1-yl) moiety of the queuosine in the wobble position of the QUC anticodon. The polypeptide is Glutamyl-Q tRNA(Asp) synthetase (Pectobacterium atrosepticum (strain SCRI 1043 / ATCC BAA-672) (Erwinia carotovora subsp. atroseptica)).